The chain runs to 608 residues: Ceramide kinase (608 aa).

Residues glutamate 160–lysine 367 enclose the DAGKc domain. Residues histidine 170 to glycine 174, threonine 201, and glycine 230 to glutamate 236 each bind ATP. Residue glycine 229 to glycine 232 coordinates substrate. Aspartate 231 acts as the Proton donor/acceptor in catalysis. The interval proline 254–aspartate 280 is disordered. Residues serine 255–valine 269 show a composition bias toward polar residues. Serine 329 provides a ligand contact to ATP.

Ca(2+) serves as cofactor.

It carries out the reaction an N-acylsphing-4-enine + ATP = an N-acylsphing-4-enine 1-phosphate + ADP + H(+). Catalyzes specifically the phosphorylation of ceramide to form ceramide 1-phosphate. Possesses high activity on ceramide analogs (C6, C8 synthetic ceramides) and lower activity on C6 and C8 dihydroceramides. Has weak activity on natural ceramides (a mixture of ceramides from bovine brain) and the synthetic substrate C2 ceramide. Has very poor activity on diacylglycerol and sphingosine. Ceramide is a critical sphingolipid metabolite that induces programmed cell death (PCD) in plants and ceramide-1-phosphate has a PCD suppressive effect. Thus, ceramide phosphorylation plays a role in the modulation of PCD and CERK activity is crucial for the maintenance of cell viability. The chain is Ceramide kinase (CERK) from Arabidopsis thaliana (Mouse-ear cress).